The chain runs to 886 residues: Microsomal triglyceride transfer protein (886 aa).

The first 24 residues, Met-1–Ala-24, serve as a signal peptide directing secretion. The region spanning Leu-28–Leu-662 is the Vitellogenin domain. 2 disulfides stabilise this stretch: Cys-174–Cys-194 and Cys-440–Cys-445.

As to quaternary structure, heterodimer; heterodimerizes with the protein disulfide isomerase. Interacts with apolipoprotein B.

The protein localises to the endoplasmic reticulum. Functionally, catalyzes the transport of triglyceride, cholesteryl ester, and phospholipid between phospholipid surfaces. Required for the secretion of plasma lipoproteins that contain apolipoprotein B. The protein is Microsomal triglyceride transfer protein of Megalobrama amblycephala (Chinese blunt snout bream).